Reading from the N-terminus, the 58-residue chain is Glutathione reductase (58 aa).

The FAD site is built by Glu5, Thr12, Cys13, and Lys21. A disulfide bridge links Cys13 with Cys18.

It belongs to the class-I pyridine nucleotide-disulfide oxidoreductase family. In terms of assembly, homodimer. FAD is required as a cofactor.

The protein resides in the cytoplasm. The enzyme catalyses 2 glutathione + NADP(+) = glutathione disulfide + NADPH + H(+). Its function is as follows. Catalyzes the reduction of glutathione disulfide (GSSG) to reduced glutathione (GSH). Constitutes the major mechanism to maintain a high GSH:GSSG ratio in the cytosol. This chain is Glutathione reductase, found in Spirulina sp.